Reading from the N-terminus, the 423-residue chain is D-tagatose-1,6-bisphosphate aldolase subunit GatZ (423 aa).

It belongs to the GatZ/KbaZ family. GatZ subfamily. As to quaternary structure, forms a complex with GatY.

Its pathway is carbohydrate metabolism; D-tagatose 6-phosphate degradation; D-glyceraldehyde 3-phosphate and glycerone phosphate from D-tagatose 6-phosphate: step 2/2. Component of the tagatose-1,6-bisphosphate aldolase GatYZ that is required for full activity and stability of the Y subunit. Could have a chaperone-like function for the proper and stable folding of GatY. When expressed alone, GatZ does not show any aldolase activity. Is involved in the catabolism of galactitol. This Salmonella choleraesuis (strain SC-B67) protein is D-tagatose-1,6-bisphosphate aldolase subunit GatZ.